The primary structure comprises 324 residues: Methionyl-tRNA formyltransferase (324 aa).

Residue 113–116 (SLLP) participates in (6S)-5,6,7,8-tetrahydrofolate binding.

It belongs to the Fmt family.

It catalyses the reaction L-methionyl-tRNA(fMet) + (6R)-10-formyltetrahydrofolate = N-formyl-L-methionyl-tRNA(fMet) + (6S)-5,6,7,8-tetrahydrofolate + H(+). Functionally, attaches a formyl group to the free amino group of methionyl-tRNA(fMet). The formyl group appears to play a dual role in the initiator identity of N-formylmethionyl-tRNA by promoting its recognition by IF2 and preventing the misappropriation of this tRNA by the elongation apparatus. In Bacteroides fragilis (strain ATCC 25285 / DSM 2151 / CCUG 4856 / JCM 11019 / LMG 10263 / NCTC 9343 / Onslow / VPI 2553 / EN-2), this protein is Methionyl-tRNA formyltransferase.